The following is a 116-amino-acid chain: Iron-sulfur cluster insertion protein ErpA (116 aa).

Iron-sulfur cluster is bound by residues C44, C108, and C110.

Belongs to the HesB/IscA family. As to quaternary structure, homodimer. The cofactor is iron-sulfur cluster.

In terms of biological role, required for insertion of 4Fe-4S clusters for at least IspG. This chain is Iron-sulfur cluster insertion protein ErpA, found in Pseudomonas aeruginosa (strain LESB58).